The following is a 478-amino-acid chain: Poly(A) RNA polymerase cid11 (478 aa).

The Mg(2+) site is built by Asp106 and Asp108. The PAP-associated domain occupies 263 to 317; it reads SLGRLLIDFFYYYGFSFNYLDSVVSVRSGTVLNKQEKGWAMEVNNSLCVEEPFNT. Residues 428–447 form a disordered region; it reads QSYENKANRDSDFQGQTSLT.

It belongs to the DNA polymerase type-B-like family. It depends on Mg(2+) as a cofactor. Requires Mn(2+) as cofactor.

The protein resides in the cytoplasm. Its subcellular location is the nucleus. The enzyme catalyses RNA(n) + ATP = RNA(n)-3'-adenine ribonucleotide + diphosphate. The polypeptide is Poly(A) RNA polymerase cid11 (cid11) (Schizosaccharomyces pombe (strain 972 / ATCC 24843) (Fission yeast)).